We begin with the raw amino-acid sequence, 458 residues long: Periphilin-1 (458 aa).

Composition is skewed to basic and acidic residues over residues 1–18 and 63–107; these read MWSE…ERAP and EGRS…DGFR. Disordered stretches follow at residues 1–51 and 63–284; these read MWSE…SYNR and EGRS…LFED. The Nuclear localization signal motif lies at 103 to 109; the sequence is RDGFRRK. A Glycyl lysine isopeptide (Lys-Gly) (interchain with G-Cter in SUMO2) cross-link involves residue Lys-109. 4 positions are modified to phosphoserine: Ser-110, Ser-114, Ser-133, and Ser-140. Residues 116–142 are compositionally biased toward basic and acidic residues; sequence YARERSPYKRDNTFFRESPVGRKDSPH. The span at 143–154 shows a compositional bias: low complexity; sequence SRSGSSVSSRSY. Lys-160 participates in a covalent cross-link: Glycyl lysine isopeptide (Lys-Gly) (interchain with G-Cter in SUMO2). 2 positions are modified to phosphoserine: Ser-161 and Ser-167. Lys-180 participates in a covalent cross-link: Glycyl lysine isopeptide (Lys-Gly) (interchain with G-Cter in SUMO2). Over residues 181–194 the composition is skewed to basic and acidic residues; that stretch reads RQNEGNPERDKERP. The residue at position 197 (Ser-197) is a Phosphoserine. Lys-199 is covalently cross-linked (Glycyl lysine isopeptide (Lys-Gly) (interchain with G-Cter in SUMO2)). 2 positions are modified to phosphoserine: Ser-201 and Ser-205. Positions 205 to 215 are enriched in low complexity; that stretch reads SPSSGSAVSSS. Positions 217-230 are enriched in basic and acidic residues; that stretch reads VLDKPSRLTEKELA. Lys-227 participates in a covalent cross-link: Glycyl lysine isopeptide (Lys-Gly) (interchain with G-Cter in SUMO2). Lys-235 and Lys-240 each carry N6-acetyllysine; alternate. Glycyl lysine isopeptide (Lys-Gly) (interchain with G-Cter in SUMO2); alternate cross-links involve residues Lys-235 and Lys-240. Basic and acidic residues predominate over residues 237 to 246; that stretch reads AAEKLEKSDE. A Phosphoserine modification is found at Ser-325. A Glycyl lysine isopeptide (Lys-Gly) (interchain with G-Cter in SUMO2) cross-link involves residue Lys-328. Residues 345 to 406 form a disordered region; the sequence is GQTWQQVPPV…TQLRRTTGAP (62 aa). Residues 377-386 are compositionally biased toward pro residues; that stretch reads PQPPQAPQPL. Residues 388–398 are compositionally biased toward basic residues; that stretch reads PRKKRVRRTTQ. Lys-453 is covalently cross-linked (Glycyl lysine isopeptide (Lys-Gly) (interchain with G-Cter in SUMO2)).

In terms of assembly, homodimer. Component of the HUSH complex; at least composed of TASOR, PPHLN1 and MPHOSPH8. Interacts with SIN3A and HDAC1. May interact with PPL. Post-translationally, substrate of transglutaminase (in vitro). As to expression, ubiquitous.

The protein resides in the nucleus. It localises to the cytoplasm. Its subcellular location is the chromosome. Functionally, component of the HUSH complex, a multiprotein complex that mediates epigenetic repression. The HUSH complex is recruited to genomic loci rich in H3K9me3 and is probably required to maintain transcriptional silencing by promoting recruitment of SETDB1, a histone methyltransferase that mediates further deposition of H3K9me3. In the HUSH complex, contributes to the maintenance of the complex at chromatin. Acts as a transcriptional corepressor and regulates the cell cycle, probably via the HUSH complex. The HUSH complex is also involved in the silencing of unintegrated retroviral DNA: some part of the retroviral DNA formed immediately after infection remains unintegrated in the host genome and is transcriptionally repressed. May be involved in epithelial differentiation by contributing to epidermal integrity and barrier formation. This Homo sapiens (Human) protein is Periphilin-1.